We begin with the raw amino-acid sequence, 300 residues long: Fatty acid hydroxylase uhd1 (300 aa).

NADP(+) contacts are provided by residues 14-20 (GANGFVG), Arg-39, 63-64 (DL), 83-85 (VAS), Tyr-156, Lys-160, 183-186 (PVYI), and Ser-199. The active-site Proton donor is the Lys-160.

Belongs to the NAD(P)-dependent epimerase/dehydratase family. Dihydroflavonol-4-reductase subfamily.

The protein operates within secondary metabolite biosynthesis. In terms of biological role, fatty acid hydroxylase; part of the gene cluster that mediates the biosynthesis of the glycolipid biosurfactant ustilagic acid (UA). UA is a secreted cellobiose glycolipid that is toxic for many microorganisms and confers biocontrol activity to U.maydis. UA consists of 15,16-dihydroxypalmitic or 2,15,16-trihydroxypalmitic acid, which is O-glycosidically linked to cellobiose at its terminal hydroxyl group. In addition, the cellobiose moiety is acetylated and acylated with a short-chain hydroxy fatty acid. UA biosynthesis starts with omega-hydroxylation of palmitic acid catalyzed by the cytochrome P450 monooxygenase cyp1. Terminal hydroxylation of palmitic acid precedes subterminal hydroxylation catalyzed by the cytochrome P450 monooxygenase cyp2. Sequential glucosylation of the hydroxy fatty acid is probably catalyzed by the glycosyltransferase ugt1. The cellobiose lipid is further decorated by acetylation of the proximal glucose residue and by acylation with a short-chain beta-hydroxy fatty acid at the distal glucose residue. The acyltransferase uat1 may be a good candidate for catalyzing either acetylation or acylation of the cellobiose lipid. The fatty acid synthase fas2 may be involved in synthesis of the carbon backbone of the short-chain beta-hydroxy fatty acid esterified to the cellobiose disaccharide. The secreted UA consists of a mixture of both alpha-hydroxylated and non-hydroxylated glycolipids; therefore, alpha-hydroxylation of the long-chain fatty, catalyzed by the fatty acid hydroxylase ahd1, occurs late in UA biosynthesis and may be the last step before secretion. The polypeptide is Fatty acid hydroxylase uhd1 (Mycosarcoma maydis (Corn smut fungus)).